We begin with the raw amino-acid sequence, 350 residues long: UDP-N-acetylglucosamine--N-acetylmuramyl-(pentapeptide) pyrophosphoryl-undecaprenol N-acetylglucosamine transferase (350 aa).

Residues 9–11, Asn-123, Arg-159, Ser-181, and Gln-281 each bind UDP-N-acetyl-alpha-D-glucosamine; that span reads TGG.

This sequence belongs to the glycosyltransferase 28 family. MurG subfamily.

It is found in the cell inner membrane. It catalyses the reaction di-trans,octa-cis-undecaprenyl diphospho-N-acetyl-alpha-D-muramoyl-L-alanyl-D-glutamyl-meso-2,6-diaminopimeloyl-D-alanyl-D-alanine + UDP-N-acetyl-alpha-D-glucosamine = di-trans,octa-cis-undecaprenyl diphospho-[N-acetyl-alpha-D-glucosaminyl-(1-&gt;4)]-N-acetyl-alpha-D-muramoyl-L-alanyl-D-glutamyl-meso-2,6-diaminopimeloyl-D-alanyl-D-alanine + UDP + H(+). Its pathway is cell wall biogenesis; peptidoglycan biosynthesis. Its function is as follows. Cell wall formation. Catalyzes the transfer of a GlcNAc subunit on undecaprenyl-pyrophosphoryl-MurNAc-pentapeptide (lipid intermediate I) to form undecaprenyl-pyrophosphoryl-MurNAc-(pentapeptide)GlcNAc (lipid intermediate II). The protein is UDP-N-acetylglucosamine--N-acetylmuramyl-(pentapeptide) pyrophosphoryl-undecaprenol N-acetylglucosamine transferase of Helicobacter hepaticus (strain ATCC 51449 / 3B1).